The sequence spans 165 residues: Hydroxyproline-rich systemin A (165 aa).

The first 18 residues, 1–18 (MRVLFLIYLILSPFGAEA), serve as a signal peptide directing secretion. Residues 19–35 (RTLLENHEGLNVGSGYG) constitute a propeptide that is removed on maturation. Disordered stretches follow at residues 33-70 (GYGR…TSEN) and 142-165 (YWNR…LHSY). A 4-hydroxyproline mark is found at Pro-42, Pro-43, Pro-45, Pro-49, and Pro-50. Pro-42, Pro-43, Pro-45, Pro-49, and Pro-50 each carry an O-linked (Ara...) hydroxyproline glycan. Positions 54–143 (VSNSVSPTRT…FDSKSDERYW (90 aa)) are excised as a propeptide. Residues Pro-150, Pro-151, and Pro-153 each carry the 4-hydroxyproline modification. O-linked (Ara...) hydroxyproline glycans are attached at residues Pro-150, Pro-151, and Pro-153. A propeptide spanning residues 162-165 (LHSY) is cleaved from the precursor.

In terms of processing, O-glycosylated; contains pentose side chains. In terms of tissue distribution, expressed in leaves.

The protein localises to the secreted. In terms of biological role, activates a lipid-based signal transduction pathway in which linolenic acid is converted to jasmonic acid, a potent activator of defense gene transcription, including proteinase inhibitors. This chain is Hydroxyproline-rich systemin A, found in Nicotiana tabacum (Common tobacco).